We begin with the raw amino-acid sequence, 586 residues long: Asparagine synthetase, nodule [glutamine-hydrolyzing] (586 aa).

The For GATase activity role is filled by C2. One can recognise a Glutamine amidotransferase type-2 domain in the interval 2–185 (CGILAVLGCS…PGHLYSSKER (184 aa)). L-glutamine-binding positions include 50–54 (RLAIV), 75–77 (NGE), and D98. Residues 193-517 (PPWFNEAIIP…PQNSARLTVP (325 aa)) enclose the Asparagine synthetase domain. Residues L232, V268, and 342–343 (SG) each bind ATP.

As to expression, root nodules.

The catalysed reaction is L-aspartate + L-glutamine + ATP + H2O = L-asparagine + L-glutamate + AMP + diphosphate + H(+). Its pathway is amino-acid biosynthesis; L-asparagine biosynthesis; L-asparagine from L-aspartate (L-Gln route): step 1/1. This is Asparagine synthetase, nodule [glutamine-hydrolyzing] (AS1) from Pisum sativum (Garden pea).